We begin with the raw amino-acid sequence, 518 residues long: Probable high-affinity hexose transporter ght7 (518 aa).

Residues 1–27 (MRDFQSRFADRYNQITNSYSYSSSRQG) are Cytoplasmic-facing. A helical transmembrane segment spans residues 28–48 (LITGMVNVGSFFGCLLSSPVA). Residues 49–54 (DKIGKR) lie on the Extracellular side of the membrane. The helical transmembrane segment at 55-75 (LSIIVWTTVYLIGIIIQVTTV) threads the bilayer. The Cytoplasmic segment spans residues 76 to 77 (PS). A helical transmembrane segment spans residues 78-98 (WVQILVAKIWTGLSIGALSVI). The Extracellular portion of the chain corresponds to 99-112 (TPGYQSEVAPAIMR). The helical transmembrane segment at 113–133 (GAIVTTYQLFITLGIFIAACI) threads the bilayer. Residues 134-149 (NMGTHKYSHGTTAQWR) are Cytoplasmic-facing. The helical transmembrane segment at 150–170 (ISIGINLLWGIITLVGIIFLP) threads the bilayer. Over 171–236 (ESPRYLIAIG…IFNANIRYRT (66 aa)) the chain is Extracellular. The chain crosses the membrane as a helical span at residues 237–257 (FLGMAVMMFQQLTGANYYFYY). At 258-271 (GTQVFRGTGMDSPY) the chain is on the cytoplasmic side. A helical membrane pass occupies residues 272–292 (LAALIPDAVNCGCTFGAIFVL). At 293 to 298 (EFFGRR) the chain is on the extracellular side. Residues 299-319 (SPLIVGGIWQYICFFIYAAVG) form a helical membrane-spanning segment. The Cytoplasmic segment spans residues 320–333 (DRALYHKNGTSNHR). A helical membrane pass occupies residues 334-354 (AGAVMIVFSCLFIFSFSQTWA). The Extracellular segment spans residues 355–374 (PAAYVIVGESYPVRYRSKCA). The helical transmembrane segment at 375 to 395 (AVATSANWFWNFLISFFTPFI) threads the bilayer. Topologically, residues 396-402 (TNSIGFK) are cytoplasmic. The chain crosses the membrane as a helical span at residues 403–423 (YGYIFASCNLTGAAIIFLFVH). Topologically, residues 424 to 518 (ETKGRTLEEI…IRPDKREPRL (95 aa)) are extracellular. Over residues 477-506 (IENTDNQGDSGSFQTSTPDDSRPEQNQASA) the composition is skewed to polar residues. Positions 477–518 (IENTDNQGDSGSFQTSTPDDSRPEQNQASATYIRPDKREPRL) are disordered.

The protein belongs to the major facilitator superfamily. Sugar transporter (TC 2.A.1.1) family.

Its subcellular location is the membrane. The chain is Probable high-affinity hexose transporter ght7 (ght7) from Schizosaccharomyces pombe (strain 972 / ATCC 24843) (Fission yeast).